Here is an 885-residue protein sequence, read N- to C-terminus: Alanine--tRNA ligase (885 aa).

Zn(2+) is bound by residues H564, H568, C676, and H680.

This sequence belongs to the class-II aminoacyl-tRNA synthetase family. Zn(2+) is required as a cofactor.

The protein resides in the cytoplasm. The enzyme catalyses tRNA(Ala) + L-alanine + ATP = L-alanyl-tRNA(Ala) + AMP + diphosphate. Catalyzes the attachment of alanine to tRNA(Ala) in a two-step reaction: alanine is first activated by ATP to form Ala-AMP and then transferred to the acceptor end of tRNA(Ala). Also edits incorrectly charged Ser-tRNA(Ala) and Gly-tRNA(Ala) via its editing domain. In Brucella anthropi (strain ATCC 49188 / DSM 6882 / CCUG 24695 / JCM 21032 / LMG 3331 / NBRC 15819 / NCTC 12168 / Alc 37) (Ochrobactrum anthropi), this protein is Alanine--tRNA ligase.